A 492-amino-acid chain; its full sequence is MATFKDACFHYRRVTKLNRELLRIGANSVWTPVSTNKIRGWCVECCQLTELTFCHGCSLAHVCQWCIQNKRCFLDNEPHLLKLRTFESPITKEKLQCIIDLYNLLFPINSSIVNKFKKTVKQRKCRNEFDKLWYNQLLLPITLNAAVFKFHSRKVYVFGFYEGSSPCVNLPYKLVNCIDLYDKLLLDQVNFERMSSLPSNLQSIYANKYFKLSRIPSMKLKQIYYSDFSKQNLINKYKFKSRIVLRNFTEFTWDFQLSLHYDLFNNKDKIFAALSTSSLKQFETHDLNLGRVKADVFELGRHCKPNYISSNHWQPASTISQCKWCNVKYAFRDMDWKMESMYNELLSFIQSCYKSNVSVGHCSSIERAYPLVKDVLWHSITKYIDQTIEKLFNVMNPVQVNNQKVISFHWQIDIALYTHIKMILKTERLPFTFTLDQFNSVIKGIVNQWCNVNELDNLPLCTEQTDTLVRLEEEGKLAEEYELLISDSEDDD.

Residues 1–81 (MATFKDACFH…CFLDNEPHLL (81 aa)) are RNA-binding. The tract at residues 42-79 (CVECCQLTELTFCHGCSLAHVCQWCIQNKRCFLDNEPH) is zinc-binding domain. Positions 82-176 (KLRTFESPIT…CVNLPYKLVN (95 aa)) are important for cytoskeleton localization. Residues 318–492 (TISQCKWCNV…LLISDSEDDD (175 aa)) form an interaction with host IRF3 region. The pLxIS motif motif lies at 483 to 486 (LLIS).

It belongs to the rotavirus NSP1 family. As to quaternary structure, interacts (via C-terminus) with host IRF3; this interaction leads to IRF3 degradation. Interacts with host IRF7; this interaction leads to IRF7 degradation. Interacts with host CUL1 and CUL3.

It localises to the host cytoplasm. It is found in the host cytoskeleton. Plays a role in the inhibition of host innate immunity by inducing the degradation of key host factors required to activate interferon production such as IRF3, IRF5 or IRF7. Associates with components of cullin RING ligases (CRLs) including CUL1 or CUL3, which are essential multisubunit ubiquitination complexes, to modulate their activities. This Oryctolagus cuniculus (Rabbit) protein is Non-structural protein 1.